A 147-amino-acid polypeptide reads, in one-letter code: Helix-loop-helix protein 13 (147 aa).

The bHLH domain occupies 41–93 (EERQTASIRERKRMCSINVAFIELRNYIPTFPYEKRLSKIDTLNLAIAYINML).

As to expression, expressed in hermaphrodite dopaminergic neurons (ADE, CEP, and PDE).

Its subcellular location is the nucleus. The protein localises to the cytoplasm. Transcriptional activator. Shown to have a role in the negative regulation of exit from L1 arrest and dauer diapause dependent on IIS signaling (insulin and insulin-like growth factor (IGF) signaling). Hypodermal expression is regulated by IIS/daf-16 while neuronal expression is not under the control of IIS/daf-16. The chain is Helix-loop-helix protein 13 from Caenorhabditis elegans.